The chain runs to 144 residues: Large ribosomal subunit protein uL16 (144 aa).

The segment covering 1 to 19 has biased composition (basic residues); the sequence is MLLPKRVKYRRQHRPKTTG. The disordered stretch occupies residues 1-23; that stretch reads MLLPKRVKYRRQHRPKTTGRSKG.

Belongs to the universal ribosomal protein uL16 family. As to quaternary structure, part of the 50S ribosomal subunit.

In terms of biological role, binds 23S rRNA and is also seen to make contacts with the A and possibly P site tRNAs. The sequence is that of Large ribosomal subunit protein uL16 from Staphylococcus aureus (strain Mu50 / ATCC 700699).